Consider the following 377-residue polypeptide: Erythronate-4-phosphate dehydrogenase (377 aa).

Residues serine 45 and threonine 67 each coordinate substrate. NAD(+) is bound by residues aspartate 147, 210–212 (ASR), and aspartate 236. Residue arginine 212 is part of the active site. Residue glutamate 241 is part of the active site. The Proton donor role is filled by histidine 258. Position 261 (glycine 261) interacts with NAD(+). Tyrosine 262 is a substrate binding site.

Belongs to the D-isomer specific 2-hydroxyacid dehydrogenase family. PdxB subfamily. As to quaternary structure, homodimer.

The protein resides in the cytoplasm. The catalysed reaction is 4-phospho-D-erythronate + NAD(+) = (R)-3-hydroxy-2-oxo-4-phosphooxybutanoate + NADH + H(+). It participates in cofactor biosynthesis; pyridoxine 5'-phosphate biosynthesis; pyridoxine 5'-phosphate from D-erythrose 4-phosphate: step 2/5. Its function is as follows. Catalyzes the oxidation of erythronate-4-phosphate to 3-hydroxy-2-oxo-4-phosphonooxybutanoate. The sequence is that of Erythronate-4-phosphate dehydrogenase from Aeromonas salmonicida (strain A449).